The primary structure comprises 283 residues: Pantothenate synthetase (283 aa).

Met-31–His-38 is an ATP binding site. His-38 serves as the catalytic Proton donor. Residue Gln-62 coordinates (R)-pantoate. Gln-62 is a binding site for beta-alanine. Residue Gly-148 to Asp-151 coordinates ATP. A (R)-pantoate-binding site is contributed by Gln-154. ATP contacts are provided by residues Ile-177 and Lys-185 to Arg-188.

This sequence belongs to the pantothenate synthetase family. In terms of assembly, homodimer.

It is found in the cytoplasm. The enzyme catalyses (R)-pantoate + beta-alanine + ATP = (R)-pantothenate + AMP + diphosphate + H(+). It functions in the pathway cofactor biosynthesis; (R)-pantothenate biosynthesis; (R)-pantothenate from (R)-pantoate and beta-alanine: step 1/1. Catalyzes the condensation of pantoate with beta-alanine in an ATP-dependent reaction via a pantoyl-adenylate intermediate. The protein is Pantothenate synthetase of Oceanobacillus iheyensis (strain DSM 14371 / CIP 107618 / JCM 11309 / KCTC 3954 / HTE831).